Consider the following 313-residue polypeptide: Spermatid maturation protein 1 (313 aa).

The chain crosses the membrane as a helical span at residues 29–49 (ILLLLGLIICINIGINMVTLL). Disordered stretches follow at residues 71–90 (KLRSPGKQTQPSKHSSPAVH), 97–151 (AVKM…HNWD), 243–263 (EPPILGPANVPDIPRRRSSGR), and 291–313 (LASGSSTAEGTRKDWVYRSMTER). Residues 76 to 85 (GKQTQPSKHS) are compositionally biased toward polar residues. A compositionally biased stretch (basic residues) spans 107-122 (TRRRHRRGSSSRRARR). A coiled-coil region spans residues 263–289 (RVTYDARDVRRRLRELTREVEALSHCY). A compositionally biased stretch (basic and acidic residues) spans 300 to 313 (GTRKDWVYRSMTER).

The protein resides in the membrane. It localises to the cytoplasm. Functionally, required for proper cytoplasm removal during spermatogenesis. The sequence is that of Spermatid maturation protein 1 (SPEM1) from Bos taurus (Bovine).